The primary structure comprises 693 residues: Oxysterol-binding protein-related protein 2B (693 aa).

Over residues 1–15 the composition is skewed to polar residues; that stretch reads MPLTRSKSLPATENG. Residues 1 to 22 are disordered; it reads MPLTRSKSLPATENGGSDRETL. One can recognise a PH domain in the interval 25 to 154; it reads GRSVAGILYK…WLQALASTRG (130 aa). A coiled-coil region spans residues 207-239; the sequence is EVQEQIKLLHEERKKLLDALRQLEMANLEAEAS. Disordered stretches follow at residues 256–298 and 600–639; these read LGRG…GEPD and EKLPPTDSRLRPDQRHLENGEYEKANEEKQRLERRQRMSR. The span at 274-284 shows a compositional bias: acidic residues; the sequence is QEFEDISEEDE. 2 stretches are compositionally biased toward basic and acidic residues: residues 285–294 and 600–635; these read ASFHDTKESF and EKLPPTDSRLRPDQRHLENGEYEKANEEKQRLERRQ. A coiled-coil region spans residues 612–643; that stretch reads DQRHLENGEYEKANEEKQRLERRQRMSRQIQE.

The protein belongs to the OSBP family. Expressed in roots, leaves, stems and flowers.

May be involved in the transport of sterols. This Arabidopsis thaliana (Mouse-ear cress) protein is Oxysterol-binding protein-related protein 2B (ORP2B).